We begin with the raw amino-acid sequence, 326 residues long: DNA-directed RNA polymerase subunit alpha (326 aa).

The tract at residues 1 to 232 (MQGSARNFLK…EQLSSFVELE (232 aa)) is alpha N-terminal domain (alpha-NTD). The segment at 246–326 (FDPQLLAAVD…NWPPVDLMSE (81 aa)) is alpha C-terminal domain (alpha-CTD).

It belongs to the RNA polymerase alpha chain family. Homodimer. The RNAP catalytic core consists of 2 alpha, 1 beta, 1 beta' and 1 omega subunit. When a sigma factor is associated with the core the holoenzyme is formed, which can initiate transcription.

It carries out the reaction RNA(n) + a ribonucleoside 5'-triphosphate = RNA(n+1) + diphosphate. Functionally, DNA-dependent RNA polymerase catalyzes the transcription of DNA into RNA using the four ribonucleoside triphosphates as substrates. The sequence is that of DNA-directed RNA polymerase subunit alpha from Ruthia magnifica subsp. Calyptogena magnifica.